The primary structure comprises 662 residues: UvrABC system protein B (662 aa).

Residues 31–188 form the Helicase ATP-binding domain; it reads DNIEGGEKAQ…NDLVDIQFER (158 aa). 44-51 is a binding site for ATP; sequence GATGTGKT. Residues 97–120 carry the Beta-hairpin motif; sequence YYDYYQPEAYVPSSDTYIEKDSSV. The region spanning 435 to 601 is the Helicase C-terminal domain; that stretch reads QIDDLLGEIN…TIKKEIRDLI (167 aa). The region spanning 626–661 is the UVR domain; sequence KELVKKLEKQMQEAVEVLDFELAAQIRDMMLEVKAL.

Belongs to the UvrB family. As to quaternary structure, forms a heterotetramer with UvrA during the search for lesions. Interacts with UvrC in an incision complex.

Its subcellular location is the cytoplasm. Its function is as follows. The UvrABC repair system catalyzes the recognition and processing of DNA lesions. A damage recognition complex composed of 2 UvrA and 2 UvrB subunits scans DNA for abnormalities. Upon binding of the UvrA(2)B(2) complex to a putative damaged site, the DNA wraps around one UvrB monomer. DNA wrap is dependent on ATP binding by UvrB and probably causes local melting of the DNA helix, facilitating insertion of UvrB beta-hairpin between the DNA strands. Then UvrB probes one DNA strand for the presence of a lesion. If a lesion is found the UvrA subunits dissociate and the UvrB-DNA preincision complex is formed. This complex is subsequently bound by UvrC and the second UvrB is released. If no lesion is found, the DNA wraps around the other UvrB subunit that will check the other stand for damage. This Streptococcus pneumoniae serotype 19F (strain G54) protein is UvrABC system protein B.